The primary structure comprises 142 residues: MATKIDKEACRAAYNLVRDDGSAVIWVTFKYDGSTIVPGEQGAEYQHFIQQCTDDVRLFAFVRFTTGDAMSKRSKFALITWIGENVSGLQRAKTGTDKTLVKEVVQNFAKEFVISDRKELEEDFIKSELKKAGGANYDAQTE.

Residue A2 is modified to N-acetylalanine. The 129-residue stretch at A2–K130 folds into the ADF-H domain. Residues T66 to K75 are flexible and important for F-actin binding. 2 positions are modified to N6-acetyllysine: K102 and K126.

Belongs to the actin-binding proteins ADF family. Coactosin subfamily. As to quaternary structure, interacts with 5-lipoxygenase (ALOX5/5LO) in a calcium-independent manner. Binds to F-actin with a stoichiometry of 1:2. Widely expressed with highest levels in placenta, lung, kidney and peripheral blood leukocytes and lower levels in brain, liver and pancreas.

It localises to the cytoplasm. It is found in the cytoskeleton. Its subcellular location is the nucleus. In terms of biological role, binds to F-actin in a calcium-independent manner. Has no direct effect on actin depolymerization. Acts as a chaperone for ALOX5 (5LO), influencing both its stability and activity in leukotrienes synthesis. This Homo sapiens (Human) protein is Coactosin-like protein (COTL1).